The chain runs to 140 residues: Nucleoside diphosphate kinase (140 aa).

ATP contacts are provided by lysine 11, phenylalanine 59, arginine 87, threonine 93, arginine 104, and asparagine 114. Histidine 117 acts as the Pros-phosphohistidine intermediate in catalysis.

This sequence belongs to the NDK family. In terms of assembly, homotetramer. Mg(2+) serves as cofactor.

Its subcellular location is the cytoplasm. It carries out the reaction a 2'-deoxyribonucleoside 5'-diphosphate + ATP = a 2'-deoxyribonucleoside 5'-triphosphate + ADP. The catalysed reaction is a ribonucleoside 5'-diphosphate + ATP = a ribonucleoside 5'-triphosphate + ADP. In terms of biological role, major role in the synthesis of nucleoside triphosphates other than ATP. The ATP gamma phosphate is transferred to the NDP beta phosphate via a ping-pong mechanism, using a phosphorylated active-site intermediate. This Gluconacetobacter diazotrophicus (strain ATCC 49037 / DSM 5601 / CCUG 37298 / CIP 103539 / LMG 7603 / PAl5) protein is Nucleoside diphosphate kinase.